We begin with the raw amino-acid sequence, 305 residues long: Ribonuclease BN (305 aa).

Residues H64, H66, D68, H69, H141, D212, and H270 each contribute to the Zn(2+) site. Catalysis depends on D68, which acts as the Proton acceptor.

The protein belongs to the RNase Z family. RNase BN subfamily. As to quaternary structure, homodimer. Zn(2+) is required as a cofactor.

Functionally, zinc phosphodiesterase, which has both exoribonuclease and endoribonuclease activities. This Escherichia coli O7:K1 (strain IAI39 / ExPEC) protein is Ribonuclease BN.